Here is a 342-residue protein sequence, read N- to C-terminus: 2-(3-amino-3-carboxypropyl)histidine synthase (342 aa).

Cysteine 59, cysteine 163, and cysteine 287 together coordinate [4Fe-4S] cluster.

It belongs to the DPH1/DPH2 family. In terms of assembly, homodimer. It depends on [4Fe-4S] cluster as a cofactor.

The enzyme catalyses L-histidyl-[translation elongation factor 2] + S-adenosyl-L-methionine = 2-[(3S)-amino-3-carboxypropyl]-L-histidyl-[translation elongation factor 2] + S-methyl-5'-thioadenosine + H(+). It participates in protein modification; peptidyl-diphthamide biosynthesis. Catalyzes the first step of diphthamide biosynthesis, i.e. the transfer of the 3-amino-3-carboxypropyl group from S-adenosyl-L-methionine (SAM) to the C2 position of the imidazole ring of the target histidine residue in translation elongation factor 2 (EF-2). This Pyrococcus horikoshii (strain ATCC 700860 / DSM 12428 / JCM 9974 / NBRC 100139 / OT-3) protein is 2-(3-amino-3-carboxypropyl)histidine synthase (dph2).